Consider the following 445-residue polypeptide: Meiosis-specific serine/threonine-protein kinase mek1 (445 aa).

The FHA domain occupies 62–116 (VSVGRSNTCNYQLLQFTASYKHFRVYSVLIDDDMDPLVYCEDQSSNGTFLNHRLI). The region spanning 160–421 (NITQRLLGIG…VKQCLSHPWF (262 aa)) is the Protein kinase domain. ATP is bound by residues 166-174 (LGIGGFSRI) and Lys-189. The active-site Proton acceptor is the Asp-281.

This sequence belongs to the protein kinase superfamily. CAMK Ser/Thr protein kinase family. CHEK2 subfamily.

The enzyme catalyses L-seryl-[protein] + ATP = O-phospho-L-seryl-[protein] + ADP + H(+). The catalysed reaction is L-threonyl-[protein] + ATP = O-phospho-L-threonyl-[protein] + ADP + H(+). Functionally, probable protein kinase required for meiotic recombination. This is Meiosis-specific serine/threonine-protein kinase mek1 (mek1) from Schizosaccharomyces pombe (strain 972 / ATCC 24843) (Fission yeast).